Reading from the N-terminus, the 326-residue chain is DNA-directed RNA polymerase subunit alpha (326 aa).

The tract at residues 1 to 232 (MQGSARNFLK…EQLSSFVELE (232 aa)) is alpha N-terminal domain (alpha-NTD). The alpha C-terminal domain (alpha-CTD) stretch occupies residues 246 to 326 (FDPQLLAAVD…NWPPVDLMSE (81 aa)).

It belongs to the RNA polymerase alpha chain family. Homodimer. The RNAP catalytic core consists of 2 alpha, 1 beta, 1 beta' and 1 omega subunit. When a sigma factor is associated with the core the holoenzyme is formed, which can initiate transcription.

The catalysed reaction is RNA(n) + a ribonucleoside 5'-triphosphate = RNA(n+1) + diphosphate. DNA-dependent RNA polymerase catalyzes the transcription of DNA into RNA using the four ribonucleoside triphosphates as substrates. The protein is DNA-directed RNA polymerase subunit alpha of Ruthia magnifica subsp. Calyptogena magnifica.